Reading from the N-terminus, the 254-residue chain is Cytochrome c oxidase subunit 2 (254 aa).

Residues 1–37 lie on the Mitochondrial intermembrane side of the membrane; that stretch reads MNNILNFYPAVITTDVAENWQIGFQDPATPIMEGIIN. Residues 38 to 58 traverse the membrane as a helical segment; the sequence is LHYDLMFFICVISVFVSWMLG. The Mitochondrial matrix portion of the chain corresponds to 59–83; the sequence is RTLWHFEQNQNKIPSSLTHGTLIEM. Residues 84–104 traverse the membrane as a helical segment; sequence IWTVTPAFILLIIAVPSFSLL. The Mitochondrial intermembrane portion of the chain corresponds to 105 to 254; sequence YAMDEIISPA…VSWISNKLNE (150 aa). His-186, Cys-221, Glu-223, Cys-225, His-229, and Met-232 together coordinate Cu cation. Glu-223 lines the Mg(2+) pocket.

It belongs to the cytochrome c oxidase subunit 2 family. Component of the cytochrome c oxidase (complex IV, CIV), a multisubunit enzyme composed of a catalytic core of 3 subunits and several supernumerary subunits. The complex exists as a monomer or a dimer and forms supercomplexes (SCs) in the inner mitochondrial membrane with ubiquinol-cytochrome c oxidoreductase (cytochrome b-c1 complex, complex III, CIII). The cofactor is Cu cation.

It is found in the mitochondrion inner membrane. The catalysed reaction is 4 Fe(II)-[cytochrome c] + O2 + 8 H(+)(in) = 4 Fe(III)-[cytochrome c] + 2 H2O + 4 H(+)(out). Functionally, component of the cytochrome c oxidase, the last enzyme in the mitochondrial electron transport chain which drives oxidative phosphorylation. The respiratory chain contains 3 multisubunit complexes succinate dehydrogenase (complex II, CII), ubiquinol-cytochrome c oxidoreductase (cytochrome b-c1 complex, complex III, CIII) and cytochrome c oxidase (complex IV, CIV), that cooperate to transfer electrons derived from NADH and succinate to molecular oxygen, creating an electrochemical gradient over the inner membrane that drives transmembrane transport and the ATP synthase. Cytochrome c oxidase is the component of the respiratory chain that catalyzes the reduction of oxygen to water. Electrons originating from reduced cytochrome c in the intermembrane space (IMS) are transferred via the dinuclear copper A center (CU(A)) of subunit 2 and heme A of subunit 1 to the active site in subunit 1, a binuclear center (BNC) formed by heme A3 and copper B (CU(B)). The BNC reduces molecular oxygen to 2 water molecules using 4 electrons from cytochrome c in the IMS and 4 protons from the mitochondrial matrix. The polypeptide is Cytochrome c oxidase subunit 2 (COX2) (Chondrus crispus (Carrageen Irish moss)).